Consider the following 829-residue polypeptide: Probable beta-glucosidase H (829 aa).

The N-linked (GlcNAc...) asparagine glycan is linked to N13. D225 is a catalytic residue. N-linked (GlcNAc...) asparagine glycosylation is found at N304, N473, N602, N627, and N664. In terms of domain architecture, PA14 spans 389-548; sequence RMLSNAVIHF…DPEQMVANAV (160 aa).

It belongs to the glycosyl hydrolase 3 family.

The protein resides in the secreted. The enzyme catalyses Hydrolysis of terminal, non-reducing beta-D-glucosyl residues with release of beta-D-glucose.. It functions in the pathway glycan metabolism; cellulose degradation. Its function is as follows. Beta-glucosidases are one of a number of cellulolytic enzymes involved in the degradation of cellulosic biomass. Catalyzes the last step releasing glucose from the inhibitory cellobiose. The polypeptide is Probable beta-glucosidase H (bglH) (Aspergillus fumigatus (strain ATCC MYA-4609 / CBS 101355 / FGSC A1100 / Af293) (Neosartorya fumigata)).